The primary structure comprises 416 residues: S-adenosylmethionine synthase (416 aa).

Residue H16 participates in ATP binding. D18 provides a ligand contact to Mg(2+). E44 contributes to the K(+) binding site. 2 residues coordinate L-methionine: E57 and Q100. Residues Q100–Q110 form a flexible loop region. Residues D175–K177, K251–F252, D260, R266–K267, A283, and K287 contribute to the ATP site. L-methionine is bound at residue D260. K291 is an L-methionine binding site.

Belongs to the AdoMet synthase family. Homotetramer; dimer of dimers. It depends on Mg(2+) as a cofactor. K(+) is required as a cofactor.

It localises to the cytoplasm. It catalyses the reaction L-methionine + ATP + H2O = S-adenosyl-L-methionine + phosphate + diphosphate. It functions in the pathway amino-acid biosynthesis; S-adenosyl-L-methionine biosynthesis; S-adenosyl-L-methionine from L-methionine: step 1/1. Catalyzes the formation of S-adenosylmethionine (AdoMet) from methionine and ATP. The overall synthetic reaction is composed of two sequential steps, AdoMet formation and the subsequent tripolyphosphate hydrolysis which occurs prior to release of AdoMet from the enzyme. The protein is S-adenosylmethionine synthase of Crocosphaera subtropica (strain ATCC 51142 / BH68) (Cyanothece sp. (strain ATCC 51142)).